The chain runs to 524 residues: Cytochrome P450 52A6 (524 aa).

The helical transmembrane segment at 17 to 34 (WYTVITLAALVFLISSNI) threads the bilayer. Position 472 (Cys472) interacts with heme.

This sequence belongs to the cytochrome P450 family. The cofactor is heme.

The protein resides in the membrane. Together with an NADPH cytochrome P450 the enzyme system catalyzes the terminal hydroxylation as the first step in the assimilation of alkanes and fatty acids. Preferentially hydroxylates hexadecane. The chain is Cytochrome P450 52A6 (CYP52A6) from Candida tropicalis (Yeast).